Consider the following 102-residue polypeptide: Citrate lyase acyl carrier protein (102 aa).

The residue at position 14 (Ser14) is an O-(phosphoribosyl dephospho-coenzyme A)serine.

It belongs to the CitD family. As to quaternary structure, oligomer with a subunit composition of (alpha,beta,gamma)6.

The protein localises to the cytoplasm. Its function is as follows. Covalent carrier of the coenzyme of citrate lyase. This chain is Citrate lyase acyl carrier protein, found in Streptococcus pyogenes serotype M4 (strain MGAS10750).